The following is a 317-amino-acid chain: Phospho-N-acetylmuramoyl-pentapeptide-transferase (317 aa).

A run of 9 helical transmembrane segments spans residues 4–24 (LIYS…ILIP), 49–69 (TPTM…AVIV), 76–96 (AMIA…DDTL), 112–132 (MILL…NPYI), 147–167 (LGVF…NAVN), 186–206 (FLAL…CAIL), 223–243 (IFMG…VAMI), 246–266 (LPLL…SVIF), and 297–317 (RVVS…FLSL).

This sequence belongs to the glycosyltransferase 4 family. MraY subfamily. Requires Mg(2+) as cofactor.

Its subcellular location is the cell membrane. The catalysed reaction is UDP-N-acetyl-alpha-D-muramoyl-L-alanyl-gamma-D-glutamyl-meso-2,6-diaminopimeloyl-D-alanyl-D-alanine + di-trans,octa-cis-undecaprenyl phosphate = di-trans,octa-cis-undecaprenyl diphospho-N-acetyl-alpha-D-muramoyl-L-alanyl-D-glutamyl-meso-2,6-diaminopimeloyl-D-alanyl-D-alanine + UMP. It functions in the pathway cell wall biogenesis; peptidoglycan biosynthesis. Functionally, catalyzes the initial step of the lipid cycle reactions in the biosynthesis of the cell wall peptidoglycan: transfers peptidoglycan precursor phospho-MurNAc-pentapeptide from UDP-MurNAc-pentapeptide onto the lipid carrier undecaprenyl phosphate, yielding undecaprenyl-pyrophosphoryl-MurNAc-pentapeptide, known as lipid I. This chain is Phospho-N-acetylmuramoyl-pentapeptide-transferase, found in Clostridium kluyveri (strain NBRC 12016).